The sequence spans 1026 residues: MKPLLLVLALCGAQVHAHSVGLRPDYNDYSDEDTRRDWLPEPLKPVPWQSETRYAQPQEAVVQAPEVGQILGISGHKTIANRPVNAFLGIRYGTVGGGLARFQAAQPIGYQGRVNATVQSPNCAQFPELDRLRLSESRGENVDDCLTLDIYAPEGANQLPVLVFVHGEMLFDGGSEEAQPDYVLEKDVLLVSINYRLAPFGFLSALTDELPGNVALSDLQLALEWLQRNVVHFGGNAGQVTLVGQAGGATLAHALSLSGRAGNLFQQLILQSGTALNPYLIDNQPLDTLSTFARLARCPPPSINPSAQGLKPLYDCLARLPTSQLVAAFEQLLLQNEHLGLTQLGGFKLVVGDPLGFLPSHPASLATNSSLALPMIIGATKDASAFIVSRIYDQLARLQSRNVSDYIDVVLRHTAPPSEHRLWKQWALREIFTPIQEQTASLQTVAPGLLELSNYILYRAPVINSISQSYRSVPAYLYTFDYRGEHHRFGHLSNPLPFGVDASLSDDSVYLFPYPPEASRLNPLDRSLSRALVTMWVNFATTGVPNPSSGVWPQATSEYGPFLRFTNNQQSPLELDPHFGEGIYLPNYRVIYKPTTNFSPPITTTTTTTTTTTTTSRPYAYNPYANWQNRPSQQHPNWHPADPEYVRAQEARQQEFIREREQRRREQQLRDQQRYPQQEPREQQDERIRQQREQEERLRQQREQEERLRQQRELEERIRQQQEREQYEREQQEREQREREELERQQREREQQQPEQQPEYNPEPVNPWGYPVQEPQPDDNPEDGRLPYPSYEQYGPEGNENLPETDANRNFSEEDREQQQQEQLRREQQEQQEREYQLQLEREQQEREQQERGQQEPGPEEYPSYEEYSRALQEKNAERDRIYAEEQERERQQQETLLQENQQHPEQSLPEEQPTHPNYEAYDGDRSYAEEQEREQQRRDQVEQEREEQPDEDQGEEYERSPDEEEAAEQDVLKVEDFPSYEAYLEAATKLREEQEEQEKLEEERYRAQQEEEDRIQAERERNSRN.

The first 17 residues, 1–17 (MKPLLLVLALCGAQVHA), serve as a signal peptide directing secretion. Tyrosine 26 and tyrosine 29 each carry sulfotyrosine. Asparagine 115 carries an N-linked (GlcNAc...) asparagine glycan. Cysteine 123 and cysteine 145 are joined by a disulfide. The residue at position 182 (tyrosine 182) is a Sulfotyrosine. A disulfide bond links cysteine 298 and cysteine 316. 2 N-linked (GlcNAc...) asparagine glycosylation sites follow: asparagine 368 and asparagine 402. Tyrosine 559 carries the sulfotyrosine modification. The tract at residues 601–641 (PITTTTTTTTTTTTTSRPYAYNPYANWQNRPSQQHPNWHPA) is disordered. Residues 603 to 615 (TTTTTTTTTTTTT) show a composition bias toward low complexity. The segment covering 625-636 (ANWQNRPSQQHP) has biased composition (polar residues). At tyrosine 645 the chain carries Sulfotyrosine. Disordered stretches follow at residues 659 to 695 (EREQ…REQE) and 723 to 1026 (EREQ…NSRN). Residues 723 to 752 (EREQYEREQQEREQREREELERQQREREQQ) show a composition bias toward basic and acidic residues. The residue at position 727 (tyrosine 727) is a Sulfotyrosine. An N-linked (GlcNAc...) asparagine glycan is attached at asparagine 810. Positions 811–854 (FSEEDREQQQQEQLRREQQEQQEREYQLQLEREQQEREQQERGQ) are enriched in basic and acidic residues. Sulfotyrosine occurs at positions 836, 862, 865, 868, 922, and 928. Positions 855–866 (QEPGPEEYPSYE) are enriched in low complexity. Basic and acidic residues predominate over residues 867–893 (EYSRALQEKNAERDRIYAEEQERERQQ). Positions 923–944 (DGDRSYAEEQEREQQRRDQVEQ) are enriched in basic and acidic residues. The span at 945–969 (EREEQPDEDQGEEYERSPDEEEAAE) shows a compositional bias: acidic residues. Sulfotyrosine occurs at positions 981, 984, and 1006. Positions 1002 to 1026 (EEERYRAQQEEEDRIQAERERNSRN) are enriched in basic and acidic residues.

The protein in the N-terminal section; belongs to the type-B carboxylesterase/lipase family. Post-translationally, extensively O-glycosylated and also N-glycosylated. In terms of processing, about four tyrosines are sulfated.

Its subcellular location is the secreted. It is found in the extracellular space. It localises to the extracellular matrix. The protein resides in the basement membrane. Not known. Binds calcium ions. In Drosophila melanogaster (Fruit fly), this protein is Glutactin (Glt).